A 556-amino-acid polypeptide reads, in one-letter code: Oxygen-dependent choline dehydrogenase (556 aa).

6–35 (DYIIIGAGSAGNVLAARLTEDPGVTVLLLE) lines the FAD pocket. Catalysis depends on H475, which acts as the Proton acceptor.

This sequence belongs to the GMC oxidoreductase family. FAD is required as a cofactor.

It carries out the reaction choline + A = betaine aldehyde + AH2. The enzyme catalyses betaine aldehyde + NAD(+) + H2O = glycine betaine + NADH + 2 H(+). It participates in amine and polyamine biosynthesis; betaine biosynthesis via choline pathway; betaine aldehyde from choline (cytochrome c reductase route): step 1/1. Involved in the biosynthesis of the osmoprotectant glycine betaine. Catalyzes the oxidation of choline to betaine aldehyde and betaine aldehyde to glycine betaine at the same rate. In Xanthomonas axonopodis pv. citri (strain 306), this protein is Oxygen-dependent choline dehydrogenase.